Here is a 257-residue protein sequence, read N- to C-terminus: Imidazole glycerol phosphate synthase subunit HisF (257 aa).

Residues D11 and D130 contribute to the active site.

It belongs to the HisA/HisF family. In terms of assembly, heterodimer of HisH and HisF.

It localises to the cytoplasm. The catalysed reaction is 5-[(5-phospho-1-deoxy-D-ribulos-1-ylimino)methylamino]-1-(5-phospho-beta-D-ribosyl)imidazole-4-carboxamide + L-glutamine = D-erythro-1-(imidazol-4-yl)glycerol 3-phosphate + 5-amino-1-(5-phospho-beta-D-ribosyl)imidazole-4-carboxamide + L-glutamate + H(+). It participates in amino-acid biosynthesis; L-histidine biosynthesis; L-histidine from 5-phospho-alpha-D-ribose 1-diphosphate: step 5/9. IGPS catalyzes the conversion of PRFAR and glutamine to IGP, AICAR and glutamate. The HisF subunit catalyzes the cyclization activity that produces IGP and AICAR from PRFAR using the ammonia provided by the HisH subunit. The sequence is that of Imidazole glycerol phosphate synthase subunit HisF from Actinobacillus pleuropneumoniae serotype 7 (strain AP76).